We begin with the raw amino-acid sequence, 358 residues long: Phosphoserine aminotransferase (358 aa).

Arg-41 is an L-glutamate binding site. Pyridoxal 5'-phosphate contacts are provided by residues 75 to 76 (AS), Trp-100, Thr-148, Asp-167, and Gln-190. Position 191 is an N6-(pyridoxal phosphate)lysine (Lys-191). Residue 233 to 234 (NT) coordinates pyridoxal 5'-phosphate.

It belongs to the class-V pyridoxal-phosphate-dependent aminotransferase family. SerC subfamily. In terms of assembly, homodimer. It depends on pyridoxal 5'-phosphate as a cofactor.

The protein localises to the cytoplasm. It catalyses the reaction O-phospho-L-serine + 2-oxoglutarate = 3-phosphooxypyruvate + L-glutamate. The enzyme catalyses 4-(phosphooxy)-L-threonine + 2-oxoglutarate = (R)-3-hydroxy-2-oxo-4-phosphooxybutanoate + L-glutamate. It participates in amino-acid biosynthesis; L-serine biosynthesis; L-serine from 3-phospho-D-glycerate: step 2/3. It functions in the pathway cofactor biosynthesis; pyridoxine 5'-phosphate biosynthesis; pyridoxine 5'-phosphate from D-erythrose 4-phosphate: step 3/5. In terms of biological role, catalyzes the reversible conversion of 3-phosphohydroxypyruvate to phosphoserine and of 3-hydroxy-2-oxo-4-phosphonooxybutanoate to phosphohydroxythreonine. In Campylobacter lari (strain RM2100 / D67 / ATCC BAA-1060), this protein is Phosphoserine aminotransferase.